The sequence spans 239 residues: Isoprenyl transferase (239 aa).

D16 is a catalytic residue. D16 contributes to the Mg(2+) binding site. Substrate is bound by residues 17-20 (GNGR), W21, R29, H33, and 61-63 (STE). The active-site Proton acceptor is the N64. Substrate is bound by residues W65, R67, R187, and 193–195 (RLS). Residue E206 coordinates Mg(2+).

Belongs to the UPP synthase family. In terms of assembly, homodimer. The cofactor is Mg(2+).

Functionally, catalyzes the condensation of isopentenyl diphosphate (IPP) with allylic pyrophosphates generating different type of terpenoids. The protein is Isoprenyl transferase of Lactobacillus johnsonii (strain CNCM I-12250 / La1 / NCC 533).